The primary structure comprises 247 residues: RNA-free ribonuclease P (247 aa).

Residues 223–247 form a disordered region; it reads SPEGEKEKGEADKKKKSHSEEAEFI.

This sequence belongs to the HARP family.

The catalysed reaction is Endonucleolytic cleavage of RNA, removing 5'-extranucleotides from tRNA precursor.. Its function is as follows. RNA-free RNase P that catalyzes the removal of the 5'-leader sequence from pre-tRNA to produce the mature 5'-terminus. The sequence is that of RNA-free ribonuclease P from Methanosarcina acetivorans (strain ATCC 35395 / DSM 2834 / JCM 12185 / C2A).